Reading from the N-terminus, the 289-residue chain is Methionyl-tRNA formyltransferase (289 aa).

Serine 106–proline 109 contacts (6S)-5,6,7,8-tetrahydrofolate.

Belongs to the Fmt family.

It carries out the reaction L-methionyl-tRNA(fMet) + (6R)-10-formyltetrahydrofolate = N-formyl-L-methionyl-tRNA(fMet) + (6S)-5,6,7,8-tetrahydrofolate + H(+). Attaches a formyl group to the free amino group of methionyl-tRNA(fMet). The formyl group appears to play a dual role in the initiator identity of N-formylmethionyl-tRNA by promoting its recognition by IF2 and preventing the misappropriation of this tRNA by the elongation apparatus. In Mycoplasmopsis pulmonis (strain UAB CTIP) (Mycoplasma pulmonis), this protein is Methionyl-tRNA formyltransferase.